We begin with the raw amino-acid sequence, 809 residues long: Putative zinc metalloprotease TRE2 (809 aa).

2 stretches are compositionally biased toward polar residues: residues 1–12 (MRSSYQPVSTTN) and 20–30 (PTASSSHNLLM). Positions 1–66 (MRSSYQPVST…PSYEFDIEDP (66 aa)) are disordered. The Cytoplasmic portion of the chain corresponds to 1-125 (MRSSYQPVST…KIGNPFILRR (125 aa)). Low complexity predominate over residues 37–50 (SPPSSNDNSIETNI). Residues 126 to 146 (FFYIIFMSFIAYYVLSSGYLF) form a helical; Signal-anchor for type II membrane protein membrane-spanning segment. Residues 147–809 (NEKASGSKGM…VEETNDIGYK (663 aa)) are Extracellular-facing. N-linked (GlcNAc...) asparagine glycosylation is present at Asn228. Residues 255 to 349 (SNGKLSKVSL…STGDASGLNW (95 aa)) enclose the PA domain. N-linked (GlcNAc...) asparagine glycans are attached at residues Asn669 and Asn736.

This sequence belongs to the peptidase M28 family. M28B subfamily.

The protein localises to the membrane. In Saccharomyces cerevisiae (strain ATCC 204508 / S288c) (Baker's yeast), this protein is Putative zinc metalloprotease TRE2 (TRE2).